Consider the following 296-residue polypeptide: MPLPTDPSPSLSAYAHPERLVTGDWLYFHLGKPGLAIVESDENVLLYDVGHIPGAVKVDWHTDLNDPKVRDYITGEQFADLMNRKGIARDDTVVIYGDKSNWWAAYALWVFTLFGHPDVRLLNGGRDLWLAERRDTSLAVPNKTSTSYPVVNRNDAPIRAFKDDVLAILGTQPLIDVRSLDEYTGKCTEMPDSPEESVLRAGHIPTARSIPWEMTVDKSGRFRSSEELERLYDFITPNDKTIVYCRIGERSSHTWFVLTHLLGKPGVRNYDGSWTEWGNTVRVPITAGESPGAVPV.

Rhodanese domains lie at 31-138 (GKPG…DTSL) and 168-286 (ILGT…VPIT). Cys-245 acts as the Cysteine persulfide intermediate in catalysis. Arg-250 contributes to the substrate binding site.

The catalysed reaction is thiosulfate + hydrogen cyanide = thiocyanate + sulfite + 2 H(+). The chain is Putative thiosulfate sulfurtransferase SseA (sseA) from Mycobacterium leprae (strain TN).